The chain runs to 578 residues: Frizzled-2 (578 aa).

Positions 1–17 (MLLRISVLFLLLGSCGA) are cleaved as a signal peptide. At 18–236 (LFGKRQKCEQ…AESHSLVSNW (219 aa)) the chain is on the extracellular side. The region spanning 20–144 (GKRQKCEQIT…MSTGNICAAP (125 aa)) is the FZ domain. 5 disulfides stabilise this stretch: Cys25/Cys86, Cys33/Cys79, Cys70/Cys108, Cys97/Cys141, and Cys101/Cys125. Asn39 is a glycosylation site (N-linked (GlcNAc...) asparagine). Residues 138-175 (GNICAAPPDTPKKQHKGHHHKNQNQNQNQNHNYSPDGP) form a disordered region. A compositionally biased stretch (basic residues) spans 150 to 159 (KQHKGHHHKN). The segment covering 160–169 (QNQNQNQNHN) has biased composition (low complexity). Residue Asn213 is glycosylated (N-linked (GlcNAc...) asparagine). The helical transmembrane segment at 237–257 (MAFWSITCCVLASFTFLTFLI) threads the bilayer. The Cytoplasmic portion of the chain corresponds to 258–268 (ETDRFQYPERP). Residues 269–289 (IFMLAFCQLMVAVGFMIRYFV) traverse the membrane as a helical segment. Residues 290–312 (GHEEIACDSMRIKGADDNSGSLC) lie on the Extracellular side of the membrane. Residues 313 to 333 (FVVFLLTYFFGMAASVWWVIL) traverse the membrane as a helical segment. At 334–354 (SLTWVLSAASKWSPEAISSFS) the chain is on the cytoplasmic side. A helical membrane pass occupies residues 355 to 375 (FHFHVVGWCLPAIQTVLVIVF). At 376–398 (NAIDGDPITGICYVGNTDLQFQR) the chain is on the extracellular side. The helical transmembrane segment at 399–419 (IFVLFPLLVYFIVGVLFLVIG) threads the bilayer. Residues 420 to 449 (FCNLWSIRNEVQKQHPSLESAHKITQLMSK) lie on the Cytoplasmic side of the membrane. A helical transmembrane segment spans residues 450-470 (IGIFSLLYTIPSLLIICVLFY). Residues 471-497 (EQNHRSLWEQSQLCSCSPKQTIGDSSL) are Extracellular-facing. The helical transmembrane segment at 498-518 (IISLIKTCCMCILGWTSGFWV) threads the bilayer. The Cytoplasmic portion of the chain corresponds to 519 to 578 (CSTKTLSSWKNAICCLGSSRSLPKYQPADILYAKSDMSSSQFYNTSLRHNHLYGGIPDKL). The short motif at 522–527 (KTLSSW) is the Lys-Thr-X-X-X-Trp motif, mediates interaction with the PDZ domain of Dvl family members element. Residues 556–558 (SSS) carry the PDZ-binding motif.

It belongs to the G-protein coupled receptor Fz/Smo family. As to expression, expressed in two pairs of head neurons and throughout the pharynx.

It localises to the cell membrane. Its function is as follows. Receptor for Wnt proteins. Most frizzled receptors are coupled to the beta-catenin canonical signaling pathway, which leads to the activation of disheveled proteins, inhibition of gsk-3 kinase, nuclear accumulation of beta-catenin and activation of Wnt target genes. A second signaling pathway involving PKC and calcium fluxes has been seen for some family members, but it is not yet clear if it represents a distinct pathway or if it can be integrated in the canonical pathway, as PKC seems to be required for Wnt-mediated inactivation of gsk-3 kinase. Both pathways seem to involve interactions with G-proteins. Required for the migration and axon formation and guidance of different neuronal cell types including canal-associated neurons (CAN), hermaphrodite-specific neurons (HSN), anterior lateral microtubule neurons (ALM), and the right Q neuroblast (QR) and its descendants. Directs ALM migration through frizzled protein mom-5 and Wnt ligands cwn-1, cwn-2 and egl-20. May act redundantly with mom-5 to direct CAN migration. Plays a role in the organization of head ganglion cells. Probably by acting as a receptor for Wnt ligand cwn-2, plays a role in the positioning of the nerve ring and may in addition positively regulate the neurite outgrowth of RME GABAergic motor neurons along the anterior-posterior axis of the body. This Caenorhabditis elegans protein is Frizzled-2.